The chain runs to 295 residues: Iron-sulfur cluster carrier protein (295 aa).

Residue 38 to 45 (GKGGVGKS) coordinates ATP.

It belongs to the Mrp/NBP35 ATP-binding proteins family. Homodimer.

Binds and transfers iron-sulfur (Fe-S) clusters to target apoproteins. Can hydrolyze ATP. The chain is Iron-sulfur cluster carrier protein from Pyrococcus furiosus (strain ATCC 43587 / DSM 3638 / JCM 8422 / Vc1).